The chain runs to 365 residues: Aminomethyltransferase (365 aa).

It belongs to the GcvT family. As to quaternary structure, the glycine cleavage system is composed of four proteins: P, T, L and H.

It carries out the reaction N(6)-[(R)-S(8)-aminomethyldihydrolipoyl]-L-lysyl-[protein] + (6S)-5,6,7,8-tetrahydrofolate = N(6)-[(R)-dihydrolipoyl]-L-lysyl-[protein] + (6R)-5,10-methylene-5,6,7,8-tetrahydrofolate + NH4(+). Its function is as follows. The glycine cleavage system catalyzes the degradation of glycine. The polypeptide is Aminomethyltransferase (Synechococcus sp. (strain CC9902)).